The sequence spans 258 residues: Thiamine thiazole synthase (258 aa).

NAD(+)-binding positions include A36, 55-56 (EK), G63, V127, and 154-156 (HVD). Residues D156 and H171 each contribute to the Fe cation site. M224 provides a ligand contact to NAD(+). R234 provides a ligand contact to glycine.

The protein belongs to the THI4 family. In terms of assembly, homooctamer; tetramer of dimers. It depends on Fe(2+) as a cofactor.

It carries out the reaction hydrogen sulfide + glycine + NAD(+) = ADP-5-ethyl-4-methylthiazole-2-carboxylate + nicotinamide + 3 H2O + H(+). The protein operates within cofactor biosynthesis; thiamine diphosphate biosynthesis. Involved in the biosynthesis of the thiazole moiety of thiamine. Catalyzes the conversion of NAD and glycine to adenosine diphosphate 5-(2-hydroxyethyl)-4-methylthiazole-2-carboxylate (ADT), an adenylated thiazole intermediate, using free sulfide as a source of sulfur. This Methanococcoides burtonii (strain DSM 6242 / NBRC 107633 / OCM 468 / ACE-M) protein is Thiamine thiazole synthase.